Consider the following 546-residue polypeptide: CTP synthase (546 aa).

Positions 1 to 266 are amidoligase domain; the sequence is MTTNYIFVTG…DDLVCQRFGI (266 aa). Residue S14 participates in CTP binding. Position 14 (S14) interacts with UTP. Residues 15 to 20 and D72 each bind ATP; that span reads SLGKGI. Mg(2+) is bound by residues D72 and E140. Residues 147-149, 187-192, and K223 contribute to the CTP site; these read DIE and KTKPTQ. Residues 187–192 and K223 contribute to the UTP site; that span reads KTKPTQ. 239–241 lines the ATP pocket; sequence KDV. Positions 291–542 constitute a Glutamine amidotransferase type-1 domain; sequence VIGMVGKYIE…VKAAGESVRG (252 aa). G352 provides a ligand contact to L-glutamine. The active-site Nucleophile; for glutamine hydrolysis is the C379. L-glutamine-binding positions include 380-383, E403, and R470; that span reads LGMQ. Residues H515 and E517 contribute to the active site.

This sequence belongs to the CTP synthase family. In terms of assembly, homotetramer.

The enzyme catalyses UTP + L-glutamine + ATP + H2O = CTP + L-glutamate + ADP + phosphate + 2 H(+). The catalysed reaction is L-glutamine + H2O = L-glutamate + NH4(+). It carries out the reaction UTP + NH4(+) + ATP = CTP + ADP + phosphate + 2 H(+). The protein operates within pyrimidine metabolism; CTP biosynthesis via de novo pathway; CTP from UDP: step 2/2. Allosterically activated by GTP, when glutamine is the substrate; GTP has no effect on the reaction when ammonia is the substrate. The allosteric effector GTP functions by stabilizing the protein conformation that binds the tetrahedral intermediate(s) formed during glutamine hydrolysis. Inhibited by the product CTP, via allosteric rather than competitive inhibition. Catalyzes the ATP-dependent amination of UTP to CTP with either L-glutamine or ammonia as the source of nitrogen. Regulates intracellular CTP levels through interactions with the four ribonucleotide triphosphates. This Aliivibrio fischeri (strain MJ11) (Vibrio fischeri) protein is CTP synthase.